The primary structure comprises 172 residues: Adenine phosphoribosyltransferase (172 aa).

Belongs to the purine/pyrimidine phosphoribosyltransferase family. In terms of assembly, homodimer.

The protein localises to the cytoplasm. The enzyme catalyses AMP + diphosphate = 5-phospho-alpha-D-ribose 1-diphosphate + adenine. It participates in purine metabolism; AMP biosynthesis via salvage pathway; AMP from adenine: step 1/1. In terms of biological role, catalyzes a salvage reaction resulting in the formation of AMP, that is energically less costly than de novo synthesis. The sequence is that of Adenine phosphoribosyltransferase from Staphylococcus aureus (strain Mu3 / ATCC 700698).